The chain runs to 265 residues: Pyridoxine 5'-phosphate synthase (265 aa).

Asparagine 6 contributes to the 3-amino-2-oxopropyl phosphate binding site. 1-deoxy-D-xylulose 5-phosphate is bound at residue 8–9 (DH). Arginine 17 lines the 3-amino-2-oxopropyl phosphate pocket. The Proton acceptor role is filled by histidine 42. 1-deoxy-D-xylulose 5-phosphate-binding residues include arginine 44 and histidine 49. The active-site Proton acceptor is glutamate 69. Position 99 (threonine 99) interacts with 1-deoxy-D-xylulose 5-phosphate. Histidine 213 (proton donor) is an active-site residue. Residues glycine 214 and 235–236 (GQ) each bind 3-amino-2-oxopropyl phosphate.

The protein belongs to the PNP synthase family. In terms of assembly, homooctamer; tetramer of dimers.

The protein resides in the cytoplasm. It catalyses the reaction 3-amino-2-oxopropyl phosphate + 1-deoxy-D-xylulose 5-phosphate = pyridoxine 5'-phosphate + phosphate + 2 H2O + H(+). The protein operates within cofactor biosynthesis; pyridoxine 5'-phosphate biosynthesis; pyridoxine 5'-phosphate from D-erythrose 4-phosphate: step 5/5. Catalyzes the complicated ring closure reaction between the two acyclic compounds 1-deoxy-D-xylulose-5-phosphate (DXP) and 3-amino-2-oxopropyl phosphate (1-amino-acetone-3-phosphate or AAP) to form pyridoxine 5'-phosphate (PNP) and inorganic phosphate. The chain is Pyridoxine 5'-phosphate synthase from Nitratiruptor sp. (strain SB155-2).